The primary structure comprises 303 residues: Pseudouridine-5'-phosphate glycosidase (303 aa).

Glu26 acts as the Proton donor in catalysis. Lys87 and Val107 together coordinate substrate. A Mn(2+)-binding site is contributed by Asp139. Position 141-143 (141-143 (SAD)) interacts with substrate. The active-site Nucleophile is Lys160.

The protein belongs to the pseudouridine-5'-phosphate glycosidase family. Homotrimer. Requires Mn(2+) as cofactor.

The catalysed reaction is D-ribose 5-phosphate + uracil = psi-UMP + H2O. Its function is as follows. Catalyzes the reversible cleavage of pseudouridine 5'-phosphate (PsiMP) to ribose 5-phosphate and uracil. Functions biologically in the cleavage direction, as part of a pseudouridine degradation pathway. The chain is Pseudouridine-5'-phosphate glycosidase from Saccharopolyspora erythraea (strain ATCC 11635 / DSM 40517 / JCM 4748 / NBRC 13426 / NCIMB 8594 / NRRL 2338).